The following is a 112-amino-acid chain: Thioredoxin-like protein YdfQ (112 aa).

The 107-residue stretch at 1–107 folds into the Thioredoxin domain; the sequence is MKEMTGLHSL…LEQKLKRVYR (107 aa). Cys-32 and Cys-35 form a disulfide bridge.

This Bacillus subtilis (strain 168) protein is Thioredoxin-like protein YdfQ (ydfQ).